Consider the following 628-residue polypeptide: WW domain-containing adapter protein with coiled-coil (628 aa).

3 disordered regions span residues 1 to 130, 152 to 338, and 417 to 532; these read MVMY…DDWS, EKPK…PQSP, and NQSP…SARS. The segment covering 37 to 49 has biased composition (basic and acidic residues); the sequence is SSDHRHDKMRDST. Residues 74 to 84 are compositionally biased toward basic residues; that stretch reads GKAKSMHLHRV. Residues 101 to 121 are compositionally biased toward low complexity; it reads NHSAIHSSNSHSSTPSKTSDS. The WW domain occupies 123–156; it reads YDPADDWSEHISSSGKKYYYNCRTEVSQWEKPKE. Basic and acidic residues-rich tracts occupy residues 152 to 168 and 176 to 185; these read EKPK…KETS and PKDRDYRREA. Residues 199-213 show a composition bias toward polar residues; that stretch reads DTSTMLPQNILSQTS. The span at 214–227 shows a compositional bias: basic and acidic residues; it reads RHNDRDYRLPRTDS. Low complexity-rich tracts occupy residues 230-260 and 299-331; these read SAAP…TVQP and SDKS…TVPV. The span at 420–446 shows a compositional bias: polar residues; that stretch reads PMSLTSDASSPRSYVSPRISTPQTNTV. Low complexity predominate over residues 467-486; that stretch reads GSKQGSSAQTASQQSSAADK. Over residues 511–532 the composition is skewed to polar residues; it reads PNHNSSTCASSTSAPQNSSARS. Positions 599-625 form a coiled coil; sequence QATLREQRILFLRQQIKELEKLKNQNS.

The protein localises to the nucleus. Its function is as follows. Acts as a linker between gene transcription and histone H2B monoubiquitination at 'Lys-120' (H2BK120ub1). Positive regulator of amino acid starvation-induced autophagy. Positively regulates MTOR activity. May negatively regulate the ubiquitin proteasome pathway. In Xenopus tropicalis (Western clawed frog), this protein is WW domain-containing adapter protein with coiled-coil (wac).